The following is a 629-amino-acid chain: MPLAQLVDLWPEVELVHEDTENGHGGPEDRGRHTSKDEVVVKEIPITHHVKEGAEKADQSHFVLLKVLGQGSFGKVFLVRKITPPDANQLYAMKVLKKATLKVRDRVRTKMERDILADVHHPFVVRLHYAFQTEGKLYLILDFLRGGDLFTRLSKEVMFTEEDVKFYLAELALGLDHLHSLGIIYRDLKPENILLDEEGHIKLTDFGLSKEAIDHEKKAYSFCGTVEYMAPEVVNRQGHSHGADWWSYGVLMFEMLTGSLPFQGKDRKETMTLILKAKLGMPQFLSNEAQSLLRALFKRNATNRLGSGVEGAEELKRHPFFSTIDWNKLYRRELSPPFKPSVTQPDDTYYFDTEFTSRTPKDSPGIPPSAGAHQLFRGFSFVAPVLVEEDAKKTSSPPVLSVPKTHSKNVLFTDVYTVRETIGVGSYSVCKRCVHKGTNMEYAVKVIDKSKRDPSEEIEILRRYGQHPNIITLKDVYEECNSIYLVTELMRGGELLDRILRQKFFSEREACSVLFTVCKTVEYLHSQGVVHRDLKPSNILYVDESGDPESIRICDFGFSKQLRAENGLLMTPCYTANFVAPEVLKRQGYDEGCDIWSLGILLYTMLAGYTPFANGPGDTPEEILARIGS.

The 260-residue stretch at 62-321 folds into the Protein kinase 1 domain; that stretch reads FVLLKVLGQG…AEELKRHPFF (260 aa). Residues 68 to 76 and Lys94 contribute to the ATP site; that span reads LGQGSFGKV. Asp187 serves as the catalytic Proton acceptor. Ser221 carries the post-translational modification Phosphoserine. In terms of domain architecture, AGC-kinase C-terminal spans 322–391; that stretch reads STIDWNKLYR…VAPVLVEEDA (70 aa). A Phosphothreonine modification is found at Thr359. Ser363 carries the post-translational modification Phosphoserine. Ser380 carries the post-translational modification Phosphoserine; by autocatalysis. Positions 416 to 629 constitute a Protein kinase 2 domain; sequence YTVRETIGVG…PEEILARIGS (214 aa). Residues 422–430 and Lys445 each bind ATP; that span reads IGVGSYSVC. Catalysis depends on Asp533, which acts as the Proton acceptor. Thr571 bears the Phosphothreonine mark.

This sequence belongs to the protein kinase superfamily. AGC Ser/Thr protein kinase family. S6 kinase subfamily. Mg(2+) serves as cofactor. In terms of processing, autophosphorylated on Ser-380, as part of the activation process.

It catalyses the reaction L-seryl-[protein] + ATP = O-phospho-L-seryl-[protein] + ADP + H(+). The catalysed reaction is L-threonyl-[protein] + ATP = O-phospho-L-threonyl-[protein] + ADP + H(+). With respect to regulation, activated by multiple phosphorylations on threonine and serine residues. Its function is as follows. Serine/threonine kinase that may play a role in mediating the growth-factor and stress induced activation of transcription. This chain is Ribosomal protein S6 kinase 2 beta, found in Xenopus laevis (African clawed frog).